The sequence spans 105 residues: Heat shock protein HspQ (105 aa).

The disordered stretch occupies residues 84–105; that stretch reads QPKLDELSASIKKQLKTPRLRN. The span at 96-105 shows a compositional bias: basic residues; that stretch reads KQLKTPRLRN.

The protein belongs to the HspQ family.

Its subcellular location is the cytoplasm. Involved in the degradation of certain denaturated proteins, including DnaA, during heat shock stress. The protein is Heat shock protein HspQ of Wigglesworthia glossinidia brevipalpis.